Here is a 308-residue protein sequence, read N- to C-terminus: Aspartate carbamoyltransferase catalytic subunit (308 aa).

The carbamoyl phosphate site is built by Arg-59 and Thr-60. Position 87 (Lys-87) interacts with L-aspartate. Residues Arg-109, His-139, and Gln-142 each contribute to the carbamoyl phosphate site. L-aspartate contacts are provided by Arg-172 and Arg-224. 2 residues coordinate carbamoyl phosphate: Ala-265 and Pro-266.

This sequence belongs to the aspartate/ornithine carbamoyltransferase superfamily. ATCase family. As to quaternary structure, heterododecamer (2C3:3R2) of six catalytic PyrB chains organized as two trimers (C3), and six regulatory PyrI chains organized as three dimers (R2).

The enzyme catalyses carbamoyl phosphate + L-aspartate = N-carbamoyl-L-aspartate + phosphate + H(+). The protein operates within pyrimidine metabolism; UMP biosynthesis via de novo pathway; (S)-dihydroorotate from bicarbonate: step 2/3. Its function is as follows. Catalyzes the condensation of carbamoyl phosphate and aspartate to form carbamoyl aspartate and inorganic phosphate, the committed step in the de novo pyrimidine nucleotide biosynthesis pathway. The chain is Aspartate carbamoyltransferase catalytic subunit from Enterococcus faecalis (strain ATCC 700802 / V583).